The primary structure comprises 294 residues: 4-hydroxy-tetrahydrodipicolinate synthase (294 aa).

Pyruvate is bound at residue threonine 45. Catalysis depends on tyrosine 133, which acts as the Proton donor/acceptor. Lysine 161 acts as the Schiff-base intermediate with substrate in catalysis. Isoleucine 203 serves as a coordination point for pyruvate.

This sequence belongs to the DapA family. Homotetramer; dimer of dimers.

It is found in the cytoplasm. The catalysed reaction is L-aspartate 4-semialdehyde + pyruvate = (2S,4S)-4-hydroxy-2,3,4,5-tetrahydrodipicolinate + H2O + H(+). It functions in the pathway amino-acid biosynthesis; L-lysine biosynthesis via DAP pathway; (S)-tetrahydrodipicolinate from L-aspartate: step 3/4. Its function is as follows. Catalyzes the condensation of (S)-aspartate-beta-semialdehyde [(S)-ASA] and pyruvate to 4-hydroxy-tetrahydrodipicolinate (HTPA). This chain is 4-hydroxy-tetrahydrodipicolinate synthase, found in Thioalkalivibrio sulfidiphilus (strain HL-EbGR7).